Here is a 435-residue protein sequence, read N- to C-terminus: Probable glycine dehydrogenase (decarboxylating) subunit 1 (435 aa).

It belongs to the GcvP family. N-terminal subunit subfamily. In terms of assembly, the glycine cleavage system is composed of four proteins: P, T, L and H. In this organism, the P 'protein' is a heterodimer of two subunits.

It catalyses the reaction N(6)-[(R)-lipoyl]-L-lysyl-[glycine-cleavage complex H protein] + glycine + H(+) = N(6)-[(R)-S(8)-aminomethyldihydrolipoyl]-L-lysyl-[glycine-cleavage complex H protein] + CO2. In terms of biological role, the glycine cleavage system catalyzes the degradation of glycine. The P protein binds the alpha-amino group of glycine through its pyridoxal phosphate cofactor; CO(2) is released and the remaining methylamine moiety is then transferred to the lipoamide cofactor of the H protein. The protein is Probable glycine dehydrogenase (decarboxylating) subunit 1 of Coprothermobacter proteolyticus (strain ATCC 35245 / DSM 5265 / OCM 4 / BT).